The sequence spans 769 residues: Acetyl-coenzyme A carboxylase carboxyl transferase subunit alpha, chloroplastic (769 aa).

A chloroplast-targeting transit peptide spans methionine 1 to threonine 54. The CoA carboxyltransferase C-terminal domain maps to leucine 132 to glutamate 385. 2 coiled-coil regions span residues glutamate 426 to glutamate 504 and lysine 631 to serine 744. The interval glycine 718–alanine 769 is disordered. A compositionally biased stretch (basic and acidic residues) spans glutamate 721–alanine 732. Residues alanine 738–serine 756 show a composition bias toward acidic residues. Phosphoserine is present on serine 741.

The protein belongs to the AccA family. As to quaternary structure, acetyl-CoA carboxylase is a heterohexamer composed of biotin carboxyl carrier protein, biotin carboxylase and two subunits each of ACCase subunit alpha and ACCase plastid-coded subunit beta (accD). In terms of tissue distribution, accumulates in fatty acids synthesizing tissues such as embryos, expanding leaves, flower buds, flowers, and developing siliques.

The protein resides in the plastid. Its subcellular location is the chloroplast inner membrane. The catalysed reaction is N(6)-carboxybiotinyl-L-lysyl-[protein] + acetyl-CoA = N(6)-biotinyl-L-lysyl-[protein] + malonyl-CoA. It functions in the pathway lipid metabolism; malonyl-CoA biosynthesis; malonyl-CoA from acetyl-CoA: step 1/1. Component of the acetyl coenzyme A carboxylase (ACC) complex. First, biotin carboxylase catalyzes the carboxylation of biotin on its carrier protein (BCCP) and then the CO(2) group is transferred by the carboxyltransferase to acetyl-CoA to form malonyl-CoA. This is Acetyl-coenzyme A carboxylase carboxyl transferase subunit alpha, chloroplastic (CAC3) from Arabidopsis thaliana (Mouse-ear cress).